Consider the following 282-residue polypeptide: Non-selective voltage-gated ion channel VDAC2 (282 aa).

The residue at position 1 (A1) is an N-acetylalanine. 19 consecutive transmembrane segments (beta stranded) span residues L25–S34, V38–S46, V53–W63, L68–N75, T79–D88, L94–S103, S110–Q119, V122–D129, A136–G144, L149–D157, K162–T174, F177–N184, E188–V197, M201–T210, R217–L226, A230–N237, L241–L250, G253–V262, and H272–E281. Residues L241 to G243 and S259 to D263 contribute to the NAD(+) site.

Belongs to the eukaryotic mitochondrial porin family. As to quaternary structure, monomer, homodimer and higher order oligomers; formation of higher order structures is necessary for scramblase activity. Expressed in skeletal muscle and oocytes.

The protein localises to the mitochondrion outer membrane. It localises to the membrane. The catalysed reaction is chloride(in) = chloride(out). It carries out the reaction K(+)(in) = K(+)(out). It catalyses the reaction a 1,2-diacyl-sn-glycero-3-phospho-L-serine(in) = a 1,2-diacyl-sn-glycero-3-phospho-L-serine(out). The enzyme catalyses a 1,2-diacyl-sn-glycero-3-phosphocholine(in) = a 1,2-diacyl-sn-glycero-3-phosphocholine(out). The catalysed reaction is a 1,2-diacyl-sn-glycero-3-phospho-(1D-myo-inositol)(in) = a 1,2-diacyl-sn-glycero-3-phospho-(1D-myo-inositol)(out). In terms of biological role, non-selective voltage-gated ion channel that mediates the transport of anions and cations through the mitochondrion outer membrane and plasma membrane. The channel adopts an open conformation at zero mV and a closed conformation at both positive and negative potentials. There are two populations of channels; the main that functions in a lower open-state conductance with lower ion selectivity, that switch, in a voltage-dependent manner, from the open to a low-conducting 'closed' state and the other that has a normal ion selectivity in the typical high conductance, 'open' state. Functionally, catalyzes the scrambling of phospholipids across the outer mitochondrial membrane; the mechanism is unrelated to channel activity and is capable of translocating both anionic and zwitterionic phospholipids. The protein is Non-selective voltage-gated ion channel VDAC2 of Xenopus laevis (African clawed frog).